The chain runs to 308 residues: Probable 5-dehydro-4-deoxyglucarate dehydratase (308 aa).

Belongs to the DapA family.

It catalyses the reaction 5-dehydro-4-deoxy-D-glucarate + H(+) = 2,5-dioxopentanoate + CO2 + H2O. It functions in the pathway carbohydrate acid metabolism; D-glucarate degradation; 2,5-dioxopentanoate from D-glucarate: step 2/2. This is Probable 5-dehydro-4-deoxyglucarate dehydratase from Bacillus licheniformis (strain ATCC 14580 / DSM 13 / JCM 2505 / CCUG 7422 / NBRC 12200 / NCIMB 9375 / NCTC 10341 / NRRL NRS-1264 / Gibson 46).